We begin with the raw amino-acid sequence, 283 residues long: Acetylglutamate kinase (283 aa).

Substrate-binding positions include 63–64, arginine 85, and asparagine 179; that span reads GG.

The protein belongs to the acetylglutamate kinase family. ArgB subfamily.

The protein resides in the cytoplasm. It carries out the reaction N-acetyl-L-glutamate + ATP = N-acetyl-L-glutamyl 5-phosphate + ADP. It functions in the pathway amino-acid biosynthesis; L-arginine biosynthesis; N(2)-acetyl-L-ornithine from L-glutamate: step 2/4. Catalyzes the ATP-dependent phosphorylation of N-acetyl-L-glutamate. The sequence is that of Acetylglutamate kinase from Clostridium kluyveri (strain NBRC 12016).